A 354-amino-acid chain; its full sequence is Protein OPG055 (354 aa).

Belongs to the orthopoxvirus OPG055 family.

Stimulates increases in peripheral microtubule dynamics and may increase the motility of the infected cells, contributing to cell-to-cell spread of the virus. Seems to inhibit the signaling via the GTPase RHOA and DIAPH1/mDia. This is Protein OPG055 (OPG055) from Homo sapiens (Human).